The sequence spans 288 residues: 30 kDa spicule matrix protein (288 aa).

The first 20 residues, 1–20 (MRCFVYVLVCVVASVSYSRA), serve as a signal peptide directing secretion. Positions 93 to 163 (ANMYCGQMHP…YTNWEGMVAP (71 aa)) constitute a C-type lectin domain. Asn-103 carries N-linked (GlcNAc...) asparagine glycosylation.

Spines and tube feet.

Matrix protein of the sea urchin embryo spicule. The function of the matrix proteins is to direct crystal growth in certain orientations and inhibit growth in others. This Hemicentrotus pulcherrimus (Sea urchin) protein is 30 kDa spicule matrix protein (SM30).